The chain runs to 614 residues: Threonine--tRNA ligase (614 aa).

An editing domain region spans residues 1 to 138 (MRTLMIHSDY…HPLSELSRTI (138 aa)). A disordered region spans residues 133 to 157 (ELSRTITTEPEEESEDSEEEPSEPS). The span at 141–154 (EPEEESEDSEEEPS) shows a compositional bias: acidic residues. A catalytic region spans residues 200 to 495 (PHVRLMREKE…TDKGNKPSLP (296 aa)). Zn(2+) is bound by residues C292, H344, and H466.

This sequence belongs to the class-II aminoacyl-tRNA synthetase family. Homodimer. Zn(2+) is required as a cofactor.

Its subcellular location is the cytoplasm. The enzyme catalyses tRNA(Thr) + L-threonine + ATP = L-threonyl-tRNA(Thr) + AMP + diphosphate + H(+). Functionally, catalyzes the attachment of threonine to tRNA(Thr) in a two-step reaction: L-threonine is first activated by ATP to form Thr-AMP and then transferred to the acceptor end of tRNA(Thr). Also edits incorrectly charged L-seryl-tRNA(Thr). This is Threonine--tRNA ligase from Methanosphaera stadtmanae (strain ATCC 43021 / DSM 3091 / JCM 11832 / MCB-3).